Consider the following 337-residue polypeptide: MTRLISADKSEDDLLEASLRPRALSDYVGQEKAKGNLGLFIDAARGRGEALDHVLLYGPPGLGKTTLANIIACEMGVNIKSTSGPVIERPGDLAAILTNLEAHDVLFIDEIHRLSHVVEEILYPAMEDFQLDIIIGQGPSARTIKLDLPKFTLVGATTRAGLLSSPLRDRFGVISRLEFYTHDELAFIITRSARIFGMAIAPEGAMELARRSRGTPRIANRLLRRVRDFAQVRADGVITRAVADQALALLEIDEMGFDMMDRAILLTIIDKFGGGPVGLDTIAAAISEESDTIEDVYEPFLIQNGFLNRTPRGRVATAAAYSHFGRIAPEPPQGKLF.

A large ATPase domain (RuvB-L) region spans residues 1–180 (MTRLISADKS…FGVISRLEFY (180 aa)). ATP contacts are provided by residues Leu-19, Arg-20, Gly-61, Lys-64, Thr-65, Thr-66, 127-129 (EDF), Arg-170, Tyr-180, and Arg-217. Thr-65 provides a ligand contact to Mg(2+). The interval 181 to 251 (THDELAFIIT…VADQALALLE (71 aa)) is small ATPAse domain (RuvB-S). A head domain (RuvB-H) region spans residues 254 to 337 (EMGFDMMDRA…APEPPQGKLF (84 aa)). Residues Arg-309 and Arg-314 each coordinate DNA.

The protein belongs to the RuvB family. As to quaternary structure, homohexamer. Forms an RuvA(8)-RuvB(12)-Holliday junction (HJ) complex. HJ DNA is sandwiched between 2 RuvA tetramers; dsDNA enters through RuvA and exits via RuvB. An RuvB hexamer assembles on each DNA strand where it exits the tetramer. Each RuvB hexamer is contacted by two RuvA subunits (via domain III) on 2 adjacent RuvB subunits; this complex drives branch migration. In the full resolvosome a probable DNA-RuvA(4)-RuvB(12)-RuvC(2) complex forms which resolves the HJ.

Its subcellular location is the cytoplasm. The enzyme catalyses ATP + H2O = ADP + phosphate + H(+). Functionally, the RuvA-RuvB-RuvC complex processes Holliday junction (HJ) DNA during genetic recombination and DNA repair, while the RuvA-RuvB complex plays an important role in the rescue of blocked DNA replication forks via replication fork reversal (RFR). RuvA specifically binds to HJ cruciform DNA, conferring on it an open structure. The RuvB hexamer acts as an ATP-dependent pump, pulling dsDNA into and through the RuvAB complex. RuvB forms 2 homohexamers on either side of HJ DNA bound by 1 or 2 RuvA tetramers; 4 subunits per hexamer contact DNA at a time. Coordinated motions by a converter formed by DNA-disengaged RuvB subunits stimulates ATP hydrolysis and nucleotide exchange. Immobilization of the converter enables RuvB to convert the ATP-contained energy into a lever motion, pulling 2 nucleotides of DNA out of the RuvA tetramer per ATP hydrolyzed, thus driving DNA branch migration. The RuvB motors rotate together with the DNA substrate, which together with the progressing nucleotide cycle form the mechanistic basis for DNA recombination by continuous HJ branch migration. Branch migration allows RuvC to scan DNA until it finds its consensus sequence, where it cleaves and resolves cruciform DNA. The protein is Holliday junction branch migration complex subunit RuvB of Geobacter sp. (strain M21).